Consider the following 374-residue polypeptide: Protein A6 homolog (374 aa).

Belongs to the chordopoxvirinae A6 family.

The protein resides in the virion. In terms of biological role, plays an essential role in immature virion (IV) to mature virion (MV) transition. The chain is Protein A6 homolog from Vertebrata (FPV).